A 561-amino-acid polypeptide reads, in one-letter code: Arginine--tRNA ligase (561 aa).

The short motif at 119–129 (PNIAKPMSMGH) is the 'HIGH' region element.

It belongs to the class-I aminoacyl-tRNA synthetase family. In terms of assembly, monomer.

It is found in the cytoplasm. It carries out the reaction tRNA(Arg) + L-arginine + ATP = L-arginyl-tRNA(Arg) + AMP + diphosphate. The protein is Arginine--tRNA ligase of Lactobacillus acidophilus (strain ATCC 700396 / NCK56 / N2 / NCFM).